Consider the following 442-residue polypeptide: Galactose/N-acetylgalactosamine-binding lectin CEL-III (442 aa).

The propeptide at 1–10 (MVSLVPCGFA) is removed in mature form. Gln11 carries the post-translational modification Pyrrolidone carboxylic acid. A has hemagglutinating activity towards rabbit erythrocytes, but no hemolytic activity towards them region spans residues 11 to 304 (QVLCTNPLDI…DWEVPTATWN (294 aa)). Disulfide bonds link Cys14/Cys59, Cys31/Cys48, and Cys72/Cys88. Residues Asp19 and 33–36 (DIVG) contribute to the D-galactose site. 2 consecutive Ricin B-type lectin domains span residues 28–102 (SKQC…RWRL) and 115–245 (EQVA…WSRP). Residues Asp33, Ile34, and Gly36 each coordinate Ca(2+). Mg(2+) contacts are provided by Asn42 and Ile43. Asp49 contributes to the D-galactose binding site. Residue Asp53 participates in Ca(2+) binding. Positions 82 and 83 each coordinate Mg(2+). Residues Val117 and 131 to 134 (DVEG) contribute to the D-galactose site. The cysteines at positions 129 and 146 are disulfide-linked. Residues Asp131, Val132, and Gly134 each coordinate Ca(2+). Residue Ile141 participates in Mg(2+) binding. A D-galactose-binding site is contributed by 144-147 (YDCQ). Ca(2+)-binding residues include Asp151, Asp178, Val179, and Gly181. Cys176 and Cys193 are disulfide-bonded. 178–181 (DVEG) provides a ligand contact to D-galactose. Mg(2+) is bound by residues Asn187 and Val188. 191–194 (YSCE) is a binding site for D-galactose. Residues Asp198, Asp219, Val220, and Gly222 each coordinate Ca(2+). Cys217 and Cys234 are oxidised to a cystine. Residue 219-222 (DVEG) coordinates D-galactose. Mg(2+) is bound by residues Asn228 and Val229. 232-235 (YRCD) serves as a coordination point for D-galactose. Asp239 lines the Ca(2+) pocket. Cystine bridges form between Cys249/Cys254 and Cys264/Cys281. The 33-residue stretch at 261 to 293 (SNKCLDVSGDQGTGDVGTWQCDGLPDQRFKWVF) folds into the Ricin B-type lectin 3 domain. The Ca(2+) site is built by Asp266, Val267, and Gly269. 266–269 (DVSG) provides a ligand contact to D-galactose. Mg(2+)-binding residues include Asp275 and Val276. D-galactose contacts are provided by residues 279-282 (WQCD) and Asp286. Ca(2+) is bound at residue Asp286. A has a strong tendency to self-associate leading to formation of oligomers region spans residues 294–442 (DDWEVPTATW…NEDCTFCTDI (149 aa)). Intrachain disulfides connect Cys308–Cys390, Cys377–Cys416, Cys425–Cys439, and Cys431–Cys436.

Oligomerizes in the human and rabbit erythrocyte membranes. Oligomerization is induced by binding of beta-1,4-linked disaccharide ligands such as lactose, lactulose, N-acetyllactosamine and phenyl-beta-D-galactoside, but only a little by N-acetylgalactosamine and galactose, and not at all by melibiose in aqueous solution in the presence of high salt concentration and pH 10. Forms heptamers that assemble into larger 21mer oligomers, which may be inserted as a transmembrane pore to the erythrocyte membrane. The cofactor is Ca(2+). Mg(2+) serves as cofactor. As to expression, expressed in body fluid (at protein level).

The protein resides in the secreted. With respect to regulation, ca(2+) is required for hemolytic activity and the activity increases with increasing calcium concentration. Hemolytic activity is inhibited by N-acetylgalactosamine (GalNAc), lactose, lactulose, galactosamine, dextran with molecular masses greater than 4 kDa, to a lesser extent by inulin and only slightly by sucrose and melezitose, but not by glucose or mannose. The activity is abolished in the presence of 10 mM EDTA. Lactose-binding increases with increasing calcium concentration, but calcium has no effect on hemagglutinating activity. Cytotoxic effect on Madin-Darby canine kidney (MDCK) cell line is strongly inhibited by galactose, lactose and N-acetylgalactosamine (GalNAc), but not by raffinose, N-acetylglucosamine (GlcNAc), glucose, mannose, ribose or sucrose. Pore formation in artificial lactosyl ceramide (LacCer) or globotetraosylceramide (Gb4Cer) containing liposomes is strongly inhibited by lactose. Functionally, galactose/N-acetylgalactosamine (Gal/GalNAc)-binding lectin with hemolytic activity. Favors saccharides that have a beta-1,4 linkage at the non-reducing end rather than saccharides having alpha-1,6 or alpha-1,4 linkages. Binds lactose, lactulose, GalNAc, galactosamine, methyl alpha-galactopyranoside, methyl beta-galactopyranoside, N-acetyllactosamine, p-nitrophenyl beta-D-galactopyranoside (pNP-Gal), p-nitrophenyl N-acetyl-beta-D-galactosaminide (pNP-GalNAc), asialofetuin, and human erythrocyte membrane lipids lactosyl ceramide (LacCer) and globoside globotetraosylceramide (Gb4Cer). Binds moderately to galactose, melibiose, raffinose, fucose, methyl alpha-galactoside and methyl beta-galactoside. Binds weakly to glucose, mannose and N-acetylglucosamine (GlcNAc). Has hemolytic activity towards human (A, B and O-type), rabbit and rat erythrocytes, but not towards mouse, chicken or horse erythrocytes. Forms ion-permeable transmembrane pores in the erythrocyte membrane as well as in artificial liposomes containing human erythrocyte membrane lipids LacCer, Gb4Cer and galactosyl ceramide (GalCer) leading to destruction of the membrane. Has hemagglutinating activity towards rabbit, human and rat erythrocytes, and at relatively high concentrations towards chicken and horse erythrocytes, but not towards mouse erythrocytes. Has dose-dependent cytotoxic effect on Madin-Darby canine kidney (MDCK), African green monkey kidney (Vero) and human epithelia carcinoma (HeLa) cell lines, but Chinese hamster ovary (CHO), rat sarcoma (XC) and potoroo rat kangaroo kidney (PtK1) cells are highly resistant to the cytotoxic effect of this protein. Impairs malaria parasite development in malaria parasite infected transgenic A.stephensi mosquitoes expressing this protein specifically in their midguts. Binds to ookinetes and leads to strong dose-dependent inhibition of ookinete formation in vitro. Leads to severely impaired oocyst formation and significantly reduced sporozoite production of rodent malaria parasite P.berghei in the salivary glands of the transgenic mosquitoes. The parasite transmission to uninfected mice (vectorial competence) of these mosquitoes is significantly impaired. Also leads to severely impaired oocyst formation of human malaria parasite P.falciparum in transgenic mosquitoes fed on mature P.falciparum gametocyte cultures. May be involved in defense mechanisms acting as a toxic protein to foreign microorganisms. May act in defense against predators. This Pseudocnus echinatus (Sea cucumber) protein is Galactose/N-acetylgalactosamine-binding lectin CEL-III.